We begin with the raw amino-acid sequence, 132 residues long: ATP synthase epsilon chain (132 aa).

It belongs to the ATPase epsilon chain family. As to quaternary structure, F-type ATPases have 2 components, CF(1) - the catalytic core - and CF(0) - the membrane proton channel. CF(1) has five subunits: alpha(3), beta(3), gamma(1), delta(1), epsilon(1). CF(0) has three main subunits: a, b and c.

The protein localises to the cell membrane. Produces ATP from ADP in the presence of a proton gradient across the membrane. This chain is ATP synthase epsilon chain (atpC), found in Bacillus sp. (strain PS3).